The primary structure comprises 269 residues: MRIALGIEYDGSRYFGWQRQREVISVQEELEKALSRIANHPVSIQCAGRTDAGVHATGQVIHFDTDANRAEGAWTLGLNSNLPPDIAVRWVKQVDEGFHARFSATARRYRYVIYNHNYRPAILGSGVSHYHETIDADLMHQAGQSLLGEHDFSTFRAVACQSNTPWRNVTHLCVSRSGPYIVLDIKANAFLHHMVRNITGSLLLVGQGLQPVEWIAEVLAARDRNLAGPTAKAGGLYLVDVDYPAELGLPQMPLGPLWLPDSAPGTTSF.

Asp-51 serves as the catalytic Nucleophile. Tyr-109 contributes to the substrate binding site.

It belongs to the tRNA pseudouridine synthase TruA family. Homodimer.

The catalysed reaction is uridine(38/39/40) in tRNA = pseudouridine(38/39/40) in tRNA. Functionally, formation of pseudouridine at positions 38, 39 and 40 in the anticodon stem and loop of transfer RNAs. This is tRNA pseudouridine synthase A from Aeromonas hydrophila subsp. hydrophila (strain ATCC 7966 / DSM 30187 / BCRC 13018 / CCUG 14551 / JCM 1027 / KCTC 2358 / NCIMB 9240 / NCTC 8049).